The primary structure comprises 684 residues: MELKATTLGKRLAQHPYDRAVILNAGIKVSGDRHEYLIPFNQLLAIHCKRGLVWGELEFVLPDEKVVRLHGTEWGETQRFYHHLDAHWRRWSGEMSEIASGVLRQQLDLIATRTGENKWLTREQTSGVQQQIRQALSALPLPVNRLEEFDNCREAWRKCQAWLKDIESARLQHNQAYTEAMLTEYADFFRQVESSPLNPAQARAVVNGEHSLLVLAGAGSGKTSVLVARAGWLLARGEASPEQILLLAFGRKAAEEMDERIRERLHTEDITARTFHALALHIIQQGSKKVPIVSKLENDTAARHELFIAEWRKQCSEKKAQAKGWRQWLTEEMQWSVPEGNFWDDEKLQRRLASRLDRWVSLMRMHGGAQAEMIASAPEEIRDLFSKRIKLMAPLLKAWKGALKAENAVDFSGLIHQAIVILEKGRFISPWKHILVDEFQDISPQRAALLAALRKQNSQTTLFAVGDDWQAIYRFSGAQMSLTTAFHENFGEGERCDLDTTYRFNSRIGEVANRFIQQNPGQLKKPLNSLTNGDKKAVTLLDESQLDALLDKLSGYAKPEERILILARYHHMRPASLEKAATRWPKLQIDFMTIHASKGQQADYVIIVGLQEGSDGFPAAARESIMEEALLPPVEDFPDAEERRLMYVALTRARHRVWALFNKENPSPFVEILKNLDVPVARKP.

Residues 195 to 505 (SPLNPAQARA…CDLDTTYRFN (311 aa)) form the UvrD-like helicase ATP-binding domain. ATP-binding positions include 216-223 (AGAGSGKT) and Arg-503.

Belongs to the helicase family. UvrD subfamily.

The catalysed reaction is Couples ATP hydrolysis with the unwinding of duplex DNA by translocating in the 3'-5' direction.. The enzyme catalyses ATP + H2O = ADP + phosphate + H(+). Helicase IV catalyzes the unwinding of duplex DNA in the 3' to 5' direction with respect to the bound single strand in a reaction that is dependent upon the hydrolysis of ATP. The polypeptide is DNA helicase IV (helD) (Escherichia coli (strain K12)).